We begin with the raw amino-acid sequence, 79 residues long: Cytochrome c-551 (79 aa).

Residues 1–14 (DGQSIYESGTSPTC) show a composition bias toward polar residues. Residues 1–35 (DGQSIYESGTSPTCASCHDRGTAGAPKINEPGDWD) are disordered. Heme c is bound by residues cysteine 14, cysteine 17, histidine 18, and methionine 55.

Binds 1 heme c group covalently per subunit.

This is Cytochrome c-551 from Halorhodospira halochloris (Ectothiorhodospira halochloris).